A 442-amino-acid chain; its full sequence is Cell division protein FtsA (442 aa).

This sequence belongs to the FtsA/MreB family. In terms of assembly, self-interacts. Interacts with FtsZ.

The protein localises to the cell inner membrane. In terms of biological role, cell division protein that is involved in the assembly of the Z ring. May serve as a membrane anchor for the Z ring. In Rhizobium meliloti (strain 1021) (Ensifer meliloti), this protein is Cell division protein FtsA.